The chain runs to 458 residues: DNA repair protein RadA (458 aa).

The segment at 10 to 27 adopts a C4-type zinc-finger fold; it reads CQSCGYESPKWMGKCPGC. 98-105 serves as a coordination point for ATP; the sequence is GDPGIGKS. Positions 255 to 259 match the RadA KNRFG motif motif; sequence KNRFG. A lon-protease-like region spans residues 354–458; the sequence is DAYLKVAGGV…AEALRTSLGG (105 aa).

The protein belongs to the RecA family. RadA subfamily. As to quaternary structure, interacts with DisA.

Functionally, DNA-dependent ATPase involved in processing of recombination intermediates, plays a role in repairing DNA breaks. Stimulates the branch migration of RecA-mediated strand transfer reactions, allowing the 3' invading strand to extend heteroduplex DNA faster. Binds ssDNA in the presence of ADP but not other nucleotides, has ATPase activity that is stimulated by ssDNA and various branched DNA structures, but inhibited by SSB. Does not have RecA's homology-searching function. Plays a role in DNA repair. Might stabilize or process Holliday junction intermediates. May work with DisA following methyl methanesulfonate (MMS) but not H(2)O(2) damage; DisA is a DNA integrity scanning protein with c-di-AMP synthase activity. The sequence is that of DNA repair protein RadA from Bacillus subtilis (strain 168).